A 191-amino-acid chain; its full sequence is Potassium-transporting ATPase KdpC subunit (191 aa).

A helical membrane pass occupies residues 6-26; the sequence is PALVLFILLTLLTGGVYPLLT.

It belongs to the KdpC family. As to quaternary structure, the system is composed of three essential subunits: KdpA, KdpB and KdpC.

It is found in the cell inner membrane. In terms of biological role, part of the high-affinity ATP-driven potassium transport (or Kdp) system, which catalyzes the hydrolysis of ATP coupled with the electrogenic transport of potassium into the cytoplasm. This subunit acts as a catalytic chaperone that increases the ATP-binding affinity of the ATP-hydrolyzing subunit KdpB by the formation of a transient KdpB/KdpC/ATP ternary complex. The chain is Potassium-transporting ATPase KdpC subunit from Klebsiella pneumoniae subsp. pneumoniae (strain ATCC 700721 / MGH 78578).